Consider the following 478-residue polypeptide: 3-isopropylmalate dehydratase large subunit (478 aa).

Cys-357, Cys-418, and Cys-421 together coordinate [4Fe-4S] cluster.

Belongs to the aconitase/IPM isomerase family. LeuC type 1 subfamily. As to quaternary structure, heterodimer of LeuC and LeuD. Requires [4Fe-4S] cluster as cofactor.

The catalysed reaction is (2R,3S)-3-isopropylmalate = (2S)-2-isopropylmalate. Its pathway is amino-acid biosynthesis; L-leucine biosynthesis; L-leucine from 3-methyl-2-oxobutanoate: step 2/4. Catalyzes the isomerization between 2-isopropylmalate and 3-isopropylmalate, via the formation of 2-isopropylmaleate. This is 3-isopropylmalate dehydratase large subunit from Novosphingobium aromaticivorans (strain ATCC 700278 / DSM 12444 / CCUG 56034 / CIP 105152 / NBRC 16084 / F199).